The chain runs to 478 residues: Lipoprotein lipase (478 aa).

Residues 1–28 form the signal peptide; that stretch reads MESKALLLLALSVCLQSLTVSRGGLVAA. An interaction with GPIHBP1 region spans residues 35–56; sequence KDFRDIESKFALRTPEDTAEDT. Cys-57 and Cys-70 form a disulfide bridge. N-linked (GlcNAc...) asparagine glycosylation occurs at Asn-73. Tyr-124 carries the 3'-nitrotyrosine modification. Ser-162 functions as the Nucleophile in the catalytic mechanism. Residue Asp-186 is the Charge relay system of the active site. Position 194 is a 3'-nitrotyrosine (Tyr-194). 4 residues coordinate Ca(2+): Ala-197, Arg-200, Ser-202, and Asp-205. Cys-246 and Cys-269 are joined by a disulfide. The segment at 246-269 is essential for determining substrate specificity; that stretch reads CNIGEALRVIAERGLGDVDQLVKC. His-271 functions as the Charge relay system in the catalytic mechanism. An N-linked (GlcNAc...) asparagine glycan is attached at Asn-287. 2 disulfide bridges follow: Cys-294–Cys-313 and Cys-305–Cys-308. One can recognise a PLAT domain in the interval 344 to 467; it reads FHYQVKIHFS…KGKSPVIFVK (124 aa). Residue Tyr-346 is modified to 3'-nitrotyrosine. N-linked (GlcNAc...) asparagine glycosylation occurs at Asn-389. Residues 420 to 424 form an important for interaction with lipoprotein particles region; the sequence is WSNWW. Residues 433–437 form an important for heparin binding region; sequence KIRVK. The interval 446–470 is interaction with GPIHBP1; the sequence is IFCSREKMSYLQKGKSPVIFVKCHD. Cys-448 and Cys-468 are disulfide-bonded.

This sequence belongs to the AB hydrolase superfamily. Lipase family. In terms of assembly, homodimer. Interacts with GPIHBP1 with 1:1 stoichiometry. Interacts with APOC2; the interaction activates LPL activity in the presence of lipids. Interaction with heparan sulfate proteoglycans is required to protect LPL against loss of activity. Associates with lipoprotein particles in blood plasma. Interacts with LMF1 and SEL1L; interaction with SEL1L is required to prevent aggregation of newly synthesized LPL in the endoplasmic reticulum (ER), and for normal export of LPL from the ER to the extracellular space. Interacts with SORL1; SORL1 acts as a sorting receptor, promoting LPL localization to endosomes and later to lysosomes, leading to degradation of newly synthesized LPL. Post-translationally, tyrosine nitration after lipopolysaccharide (LPS) challenge down-regulates the lipase activity. In terms of tissue distribution, detected in milk (at protein level).

The protein localises to the cell membrane. It localises to the secreted. It is found in the extracellular space. Its subcellular location is the extracellular matrix. It catalyses the reaction a triacylglycerol + H2O = a diacylglycerol + a fatty acid + H(+). It carries out the reaction a 1,2-diacyl-sn-glycero-3-phosphocholine + H2O = a 2-acyl-sn-glycero-3-phosphocholine + a fatty acid + H(+). The catalysed reaction is 1,2,3-tri-(9Z-octadecenoyl)-glycerol + H2O = di-(9Z)-octadecenoylglycerol + (9Z)-octadecenoate + H(+). The enzyme catalyses 1,2-di-(9Z-octadecenoyl)-sn-glycero-3-phosphocholine + H2O = (9Z-octadecenoyl)-sn-glycero-3-phosphocholine + (9Z)-octadecenoate + H(+). It catalyses the reaction 1,2,3-tributanoylglycerol + H2O = dibutanoylglycerol + butanoate + H(+). It carries out the reaction 1,2-dihexadecanoyl-sn-glycero-3-phosphocholine + H2O = hexadecanoyl-sn-glycero-3-phosphocholine + hexadecanoate + H(+). Its activity is regulated as follows. The apolipoprotein APOC2 acts as a coactivator of LPL activity. Ca(2+) binding promotes protein stability and formation of the active homodimer. Interaction with GPIHBP1 protects LPL against inactivation by ANGPTL4. Functionally, key enzyme in triglyceride metabolism. Catalyzes the hydrolysis of triglycerides from circulating chylomicrons and very low density lipoproteins (VLDL), and thereby plays an important role in lipid clearance from the blood stream, lipid utilization and storage. Although it has both phospholipase and triglyceride lipase activities it is primarily a triglyceride lipase with low but detectable phospholipase activity. Mediates margination of triglyceride-rich lipoprotein particles in capillaries. Recruited to its site of action on the luminal surface of vascular endothelium by binding to GPIHBP1 and cell surface heparan sulfate proteoglycans. The protein is Lipoprotein lipase (LPL) of Bos taurus (Bovine).